The primary structure comprises 364 residues: Aminomethyltransferase (364 aa).

The protein belongs to the GcvT family. In terms of assembly, the glycine cleavage system is composed of four proteins: P, T, L and H.

The enzyme catalyses N(6)-[(R)-S(8)-aminomethyldihydrolipoyl]-L-lysyl-[protein] + (6S)-5,6,7,8-tetrahydrofolate = N(6)-[(R)-dihydrolipoyl]-L-lysyl-[protein] + (6R)-5,10-methylene-5,6,7,8-tetrahydrofolate + NH4(+). In terms of biological role, the glycine cleavage system catalyzes the degradation of glycine. In Shigella boydii serotype 18 (strain CDC 3083-94 / BS512), this protein is Aminomethyltransferase.